We begin with the raw amino-acid sequence, 480 residues long: MNFETVIGLEVHVELNTNSKIFSPTSAHFGNEQNTNTNVIDWSFPGVLPVLNKGVVDAGIKAALALNMDIHQHMHFDRKNYFYPDNPKAYQISQFDEPIGYNGWIEVQLEDGTTKKIGIERAHLEEDAGKNTHGTDGFSYVDLNRQGVPLIEIVSEADMRSPEEAYAYLTALKEVIQYTGISDVKMEEGSMRVDANISLRPYGQEEFGTKTELKNLNSFSNVRKGLEYEVQRQAKILRSGGVIRQETRRYDEASKSTILMRVKEGAADYRYFPEPDLPLFEISDEWIEEMRTELPEFPKDRRARYVAELGLSDYDANQLTATKVTSDFFEAAVALGGDAKQVSNWLQGEVAQFLNAEGKTLEEIQLTPENLVEMIAIIEDGTISSKIAKKVFVHLAKNGGGAREYVEKAGLVQISDPEVLIPIIHQVFADNEAAIADFKSGKRNADKAFTGFLMKATKGQANPQVALKLLAQELAKLKED.

Belongs to the GatB/GatE family. GatB subfamily. Heterotrimer of A, B and C subunits.

It catalyses the reaction L-glutamyl-tRNA(Gln) + L-glutamine + ATP + H2O = L-glutaminyl-tRNA(Gln) + L-glutamate + ADP + phosphate + H(+). The catalysed reaction is L-aspartyl-tRNA(Asn) + L-glutamine + ATP + H2O = L-asparaginyl-tRNA(Asn) + L-glutamate + ADP + phosphate + 2 H(+). Its function is as follows. Allows the formation of correctly charged Asn-tRNA(Asn) or Gln-tRNA(Gln) through the transamidation of misacylated Asp-tRNA(Asn) or Glu-tRNA(Gln) in organisms which lack either or both of asparaginyl-tRNA or glutaminyl-tRNA synthetases. The reaction takes place in the presence of glutamine and ATP through an activated phospho-Asp-tRNA(Asn) or phospho-Glu-tRNA(Gln). This chain is Aspartyl/glutamyl-tRNA(Asn/Gln) amidotransferase subunit B, found in Streptococcus thermophilus (strain ATCC BAA-491 / LMD-9).